Here is a 330-residue protein sequence, read N- to C-terminus: Aspartate--ammonia ligase (330 aa).

This sequence belongs to the class-II aminoacyl-tRNA synthetase family. AsnA subfamily.

The protein localises to the cytoplasm. The enzyme catalyses L-aspartate + NH4(+) + ATP = L-asparagine + AMP + diphosphate + H(+). It participates in amino-acid biosynthesis; L-asparagine biosynthesis; L-asparagine from L-aspartate (ammonia route): step 1/1. This is Aspartate--ammonia ligase from Streptococcus equi subsp. equi (strain 4047).